The primary structure comprises 431 residues: Dihydroorotase (431 aa).

Residues H55 and H57 each coordinate Zn(2+). Residues 57–59 (HFR) and N89 contribute to the substrate site. The Zn(2+) site is built by K139, H169, H223, and D290. An N6-carboxylysine modification is found at K139. The active site involves D290. Substrate-binding positions include H294 and 308 to 309 (PG).

It belongs to the metallo-dependent hydrolases superfamily. DHOase family. Class I DHOase subfamily. Zn(2+) is required as a cofactor.

The enzyme catalyses (S)-dihydroorotate + H2O = N-carbamoyl-L-aspartate + H(+). It functions in the pathway pyrimidine metabolism; UMP biosynthesis via de novo pathway; (S)-dihydroorotate from bicarbonate: step 3/3. Catalyzes the reversible cyclization of carbamoyl aspartate to dihydroorotate. The sequence is that of Dihydroorotase from Methanothermobacter thermautotrophicus (strain ATCC 29096 / DSM 1053 / JCM 10044 / NBRC 100330 / Delta H) (Methanobacterium thermoautotrophicum).